The following is a 3130-amino-acid chain: DNA polymerase zeta catalytic subunit (3130 aa).

Disordered regions lie at residues 263-295, 425-457, 487-510, 524-548, 697-728, and 817-871; these read AIWE…VPAT, GYRG…NEPQ, LCRN…MEWS, LDGT…SSVI, PNEN…EKGN, and VTYK…EKDN. A compositionally biased stretch (basic and acidic residues) spans 286 to 295; it reads SQDHRFVPAT. Positions 497 to 509 are enriched in acidic residues; it reads EDDDSSSGEEMEW. Polar residues-rich tracts occupy residues 533–548 and 699–728; these read DNPL…SSVI and ENTL…EKGN. The span at 828–838 shows a compositional bias: basic residues; that stretch reads SRLKLNKRKLA. The span at 842–854 shows a compositional bias: low complexity; sequence ETSTKSSETGSTK. The span at 855 to 866 shows a compositional bias: polar residues; the sequence is DNFIQNNPCNSN. Phosphoserine is present on Ser-1030. 3 disordered regions span residues 1035–1095, 1162–1231, and 1537–1600; these read YPIY…YNAE, SRIG…DEKI, and RQQK…KLLK. A Phosphothreonine modification is found at Thr-1041. Basic residues-rich tracts occupy residues 1043–1061 and 1166–1179; these read KKSH…KTGK and KTSR…KSKA. A compositionally biased stretch (basic and acidic residues) spans 1213–1231; that stretch reads KTNEKGTSRKHTTLKDEKI. Residues 1540-1565 show a composition bias toward polar residues; that stretch reads KAQNANTTQDPLSNKHQPNKNISGSL. Basic residues predominate over residues 1570-1589; the sequence is ANKRTRSVTSPRKPRTPRST. Over residues 1590 to 1600 the composition is skewed to basic and acidic residues; that stretch reads KQKEKIPKLLK. Residue Ser-1724 is modified to Phosphoserine. 5 disordered regions span residues 1845–1882, 1962–1984, 2017–2050, 2080–2150, and 2216–2236; these read NDML…KPLM, NPRP…SNSP, ERSK…PVVP, PTTG…SPVE, and APGL…NKKG. The mediates interaction with MAD2L2 stretch occupies residues 1847–1898; the sequence is MLTPTPDSSPRSTSSPSQSKNGSFTPRTANILKPLMSPPSREEIMATLLDHD. Over residues 1849–1865 the composition is skewed to low complexity; that stretch reads TPTPDSSPRSTSSPSQS. Ser-1967 is subject to Phosphoserine. The span at 2080 to 2092 shows a compositional bias: polar residues; that stretch reads PTTGCSQTASESQ. The segment covering 2113-2122 has biased composition (low complexity); that stretch reads YYISYSSPDS. Residues 2221–2236 are compositionally biased toward polar residues; that stretch reads PLSTEPKTQKLSNKKG. Zn(2+) is bound by residues Cys-3042, Cys-3045, Cys-3054, and Cys-3057. Residues 3042–3057 form a CysA-type zinc finger; it reads CPVCDDLTQHGICSKC. Residues Cys-3086, Cys-3089, Cys-3099, and Cys-3104 each coordinate [4Fe-4S] cluster. Residues 3086–3104 carry the CysB motif motif; the sequence is CKNCTGCFDRHIPCVSLNC.

This sequence belongs to the DNA polymerase type-B family. As to quaternary structure, heterodimer with MAD2L2. This dimer forms the minimal DNA polymerase zeta complex (Pol-zeta2), with REV3L bearing DNA polymerase catalytic activity, although its activity is very low in this context. Component of the tetrameric Pol-zeta complex (Pol-zeta4), which consists of REV3L, MAD2L2, POLD2 and POLD3; Pol-zeta4 is the fully active form of DNA polymerase zeta. It depends on [4Fe-4S] cluster as a cofactor. In terms of tissue distribution, ubiquitously expressed.

It is found in the nucleus. The enzyme catalyses DNA(n) + a 2'-deoxyribonucleoside 5'-triphosphate = DNA(n+1) + diphosphate. Its function is as follows. Catalytic subunit of the DNA polymerase zeta complex, an error-prone polymerase specialized in translesion DNA synthesis (TLS). Lacks an intrinsic 3'-5' exonuclease activity and thus has no proofreading function. The chain is DNA polymerase zeta catalytic subunit (REV3L) from Homo sapiens (Human).